The following is a 343-amino-acid chain: Dihydroorotase (343 aa).

Residues histidine 14 and histidine 16 each contribute to the Zn(2+) site. Substrate is bound by residues 16–18 and asparagine 42; that span reads HVR. The Zn(2+) site is built by lysine 99, histidine 136, and histidine 174. Lysine 99 is subject to N6-carboxylysine. Histidine 136 provides a ligand contact to substrate. Leucine 219 contributes to the substrate binding site. A Zn(2+)-binding site is contributed by aspartate 247. Aspartate 247 is an active-site residue. 2 residues coordinate substrate: histidine 251 and alanine 263.

The protein belongs to the metallo-dependent hydrolases superfamily. DHOase family. Class II DHOase subfamily. In terms of assembly, homodimer. Requires Zn(2+) as cofactor.

The catalysed reaction is (S)-dihydroorotate + H2O = N-carbamoyl-L-aspartate + H(+). The protein operates within pyrimidine metabolism; UMP biosynthesis via de novo pathway; (S)-dihydroorotate from bicarbonate: step 3/3. Catalyzes the reversible cyclization of carbamoyl aspartate to dihydroorotate. This is Dihydroorotase from Variovorax paradoxus (strain S110).